Reading from the N-terminus, the 299-residue chain is Regucalcin (299 aa).

A divalent metal cation is bound at residue Glu18. Arg101, Asn103, and Glu121 together coordinate substrate. Lys144 is subject to N6-succinyllysine. The a divalent metal cation site is built by Asn154 and Asp204. The active-site Proton donor/acceptor is the Asp204. An N6-succinyllysine mark is found at Lys244 and Lys253.

Belongs to the SMP-30/CGR1 family. As to quaternary structure, monomer. Zn(2+) is required as a cofactor. Mn(2+) serves as cofactor. Requires Ca(2+) as cofactor. It depends on Mg(2+) as a cofactor.

The protein localises to the cytoplasm. The enzyme catalyses D-glucono-1,5-lactone + H2O = D-gluconate + H(+). It participates in cofactor biosynthesis; L-ascorbate biosynthesis via UDP-alpha-D-glucuronate pathway; L-ascorbate from UDP-alpha-D-glucuronate: step 3/4. Functionally, gluconolactonase with low activity towards other sugar lactones, including gulonolactone and galactonolactone. Catalyzes a key step in ascorbic acid (vitamin C) biosynthesis. Can also hydrolyze diisopropyl phosphorofluoridate and phenylacetate (in vitro). Calcium-binding protein. Modulates Ca(2+) signaling, and Ca(2+)-dependent cellular processes and enzyme activities. The polypeptide is Regucalcin (RGN) (Oryctolagus cuniculus (Rabbit)).